The primary structure comprises 536 residues: Protein ST7 homolog (536 aa).

A run of 2 helical transmembrane segments spans residues 3-23 (CSWT…LFFL) and 49-69 (FYVA…IFEW). A coiled-coil region spans residues 192-219 (AEEDTETVAQAENVLRRALRAIENTLST). Residues 464 to 484 (STLGMLIQTFACLAICILAVL) traverse the membrane as a helical segment.

Belongs to the ST7 family.

The protein resides in the membrane. This Caenorhabditis briggsae protein is Protein ST7 homolog.